The chain runs to 255 residues: Short chain dehydrogenase adrF (255 aa).

Positions 11, 118, 150, 154, and 183 each coordinate NADP(+). Residue tyrosine 150 is the Proton acceptor of the active site. The Lowers pKa of active site Tyr role is filled by lysine 154.

Belongs to the short-chain dehydrogenases/reductases (SDR) family.

Its pathway is secondary metabolite biosynthesis; terpenoid biosynthesis. In terms of biological role, short chain dehydrogenase; part of the gene cluster that mediates the biosynthesis of andrastins, meroterpenoid compounds that exhibit inhibitory activity against ras farnesyltransferase, suggesting that they could be promising leads for antitumor agents. The first step of the pathway is the synthesis of 3,5-dimethylorsellinic acid (DMOA) by the polyketide synthase adrD via condensation of one acetyl-CoA starter unit with 3 malonyl-CoA units and 2 methylations. DMAO is then converted to farnesyl-DMAO by the prenyltransferase adrG. The methyltransferase adrK catalyzes the methylation of the carboxyl group of farnesyl-DMAO to farnesyl-DMAO methyl ester which is further converted to epoxyfarnesyl-DMAO methyl ester by the FAD-dependent monooxygenase adrH. The terpene cyclase adrI then catalyzes the carbon skeletal rearrangement to generate the andrastin E, the first compound in the pathway having the andrastin scaffold, with the tetracyclic ring system. The post-cyclization tailoring enzymes adrF, adrE, adrJ, and adrA, are involved in the conversion of andrastin E into andrastin A. The short chain dehydrogenase adrF is responsible for the oxidation of the C-3 a hydroxyl group of andrastin E to yield the corresponding ketone, andrastin D. The ketoreductase adrE stereoselectively reduces the carbonyl moiety to reverse the stereochemistry of the C-3 position to yield andrastin F. The acetyltransferase adrJ is the acetyltransferase that attaches the acetyl group to the C-3 hydroxyl group of andrastin F to yield andrastin C. Finally, the cytochrome P450 monooxygenase adrA catalyzes two sequential oxidation reactions of the C-23 methyl group, to generate the corresponding alcohol andrastin B, and aldehyde andrastin A. The polypeptide is Short chain dehydrogenase adrF (Penicillium rubens (strain ATCC 28089 / DSM 1075 / NRRL 1951 / Wisconsin 54-1255) (Penicillium chrysogenum)).